We begin with the raw amino-acid sequence, 338 residues long: MNPLDQLVIQAQTDFAAADDAAALENAKAKYLGKTGQITEQMKSLGKLAPDERKTQGAVINSAKEKIEAALTARRDALSNAQMESRLNAEAIDITLPGRGRGTGGIHPVMRTWQRVEEIFGSIGFDVADGPEIENDWTNFTALNSPENHPARSMQDTFYIEGNDTQGKPLLLRTHTSPMQVRYARMNKPPIRVIAPGRTYRVDSDATHSPMFHQVEGLWIDENISFADLKGVYLNFVKAFFETDDLQVRFRPSYFPFTEPSAEIDIAFGSGPLKGRWLEVSGAGQVHPNVMRNMGFDPEQFIGFAFGSGLERLTMLRYGINDLRLFYEGDLRFLKQFN.

Glu259 contributes to the Mg(2+) binding site.

Belongs to the class-II aminoacyl-tRNA synthetase family. Phe-tRNA synthetase alpha subunit type 1 subfamily. In terms of assembly, tetramer of two alpha and two beta subunits. Mg(2+) is required as a cofactor.

It is found in the cytoplasm. The catalysed reaction is tRNA(Phe) + L-phenylalanine + ATP = L-phenylalanyl-tRNA(Phe) + AMP + diphosphate + H(+). In Herminiimonas arsenicoxydans, this protein is Phenylalanine--tRNA ligase alpha subunit.